Here is a 329-residue protein sequence, read N- to C-terminus: GTPase Obg (329 aa).

One can recognise an Obg domain in the interval 1-159; it reads MQFIDQAIID…WSLQLELKLL (159 aa). An OBG-type G domain is found at 160–328; the sequence is AEVGIIGLPN…LLSSIWYELG (169 aa). ATP is bound by residues 166–173, 191–195, 213–216, 280–283, and 309–311; these read GLPNAGKS, FTTLI, DIPG, NKKE, and SAV. Ser-173 and Thr-193 together coordinate Mg(2+).

It belongs to the TRAFAC class OBG-HflX-like GTPase superfamily. OBG GTPase family. In terms of assembly, monomer. Requires Mg(2+) as cofactor.

The protein localises to the cytoplasm. In terms of biological role, an essential GTPase which binds GTP, GDP and possibly (p)ppGpp with moderate affinity, with high nucleotide exchange rates and a fairly low GTP hydrolysis rate. Plays a role in control of the cell cycle, stress response, ribosome biogenesis and in those bacteria that undergo differentiation, in morphogenesis control. The sequence is that of GTPase Obg from Prochlorococcus marinus (strain NATL1A).